Consider the following 160-residue polypeptide: Nucleotide-binding protein Ping_2261 (160 aa).

Belongs to the YajQ family.

In terms of biological role, nucleotide-binding protein. The sequence is that of Nucleotide-binding protein Ping_2261 from Psychromonas ingrahamii (strain DSM 17664 / CCUG 51855 / 37).